We begin with the raw amino-acid sequence, 93 residues long: MPRSLKKGPFIDDHLLKKVDVQNEKNTKQVIKTWSRRSTIIPDFIGHTFAVHDGRKHVPVFVTESMVGHKLGEFAPTRTFKGHIKDDRKSKRR.

This sequence belongs to the universal ribosomal protein uS19 family.

In terms of biological role, protein S19 forms a complex with S13 that binds strongly to the 16S ribosomal RNA. This chain is Small ribosomal subunit protein uS19, found in Mycobacteroides abscessus (strain ATCC 19977 / DSM 44196 / CCUG 20993 / CIP 104536 / JCM 13569 / NCTC 13031 / TMC 1543 / L948) (Mycobacterium abscessus).